A 334-amino-acid polypeptide reads, in one-letter code: Desumoylating isopeptidase 1 homolog (334 aa).

The 145-residue stretch at Thr-30–Trp-174 folds into the PPPDE domain. Active-site residues include His-55 and Cys-133. Residues Ser-310 to Gly-325 show a composition bias toward polar residues. Positions Ser-310–Cys-334 are disordered.

Belongs to the DeSI family. As to expression, expressed in the pharynx, hypodermis, intestine, head neuron and tail neuron.

The protein resides in the cytoplasm. Its subcellular location is the nucleus. In terms of biological role, protease which deconjugates SUMO from some substrate proteins. Has isopeptidase but not SUMO-processing activity. Collaborates with ubql-1 in the export of ubiquitinated proteins from the nucleus to the cytoplasm. This chain is Desumoylating isopeptidase 1 homolog, found in Caenorhabditis elegans.